Reading from the N-terminus, the 464-residue chain is uncharacterized protein (464 aa).

The N-terminal stretch at 1–24 (MSRFVPRIIPFYLLLLVAGGTANA) is a signal peptide.

This sequence belongs to the intimin/invasin family.

The protein resides in the periplasm. This is an uncharacterized protein from Escherichia coli (strain K12).